The chain runs to 156 residues: MSRKNQAPKREVLPDPLYNSKLVTRLINRVMLDGKRGTAASIVYGAFDQIKEATGNDALEVFETAMENIMPVLEVRARRVGGSNYQVPVEVRPERRTTLGLRWLVTIARNRGEHTMIDRLAKEIMDAANNTGAAVKKREDTHKMAEANRAFAHFRW.

It belongs to the universal ribosomal protein uS7 family. Part of the 30S ribosomal subunit. Contacts proteins S9 and S11.

One of the primary rRNA binding proteins, it binds directly to 16S rRNA where it nucleates assembly of the head domain of the 30S subunit. Is located at the subunit interface close to the decoding center, probably blocks exit of the E-site tRNA. The chain is Small ribosomal subunit protein uS7 from Streptococcus suis (strain 98HAH33).